The chain runs to 90 residues: Probable Fe(2+)-trafficking protein (90 aa).

It belongs to the Fe(2+)-trafficking protein family.

Functionally, could be a mediator in iron transactions between iron acquisition and iron-requiring processes, such as synthesis and/or repair of Fe-S clusters in biosynthetic enzymes. This is Probable Fe(2+)-trafficking protein from Colwellia psychrerythraea (strain 34H / ATCC BAA-681) (Vibrio psychroerythus).